A 199-amino-acid chain; its full sequence is Probable nicotinate-nucleotide adenylyltransferase (199 aa).

The protein belongs to the NadD family.

It carries out the reaction nicotinate beta-D-ribonucleotide + ATP + H(+) = deamido-NAD(+) + diphosphate. Its pathway is cofactor biosynthesis; NAD(+) biosynthesis; deamido-NAD(+) from nicotinate D-ribonucleotide: step 1/1. Its function is as follows. Catalyzes the reversible adenylation of nicotinate mononucleotide (NaMN) to nicotinic acid adenine dinucleotide (NaAD). The protein is Probable nicotinate-nucleotide adenylyltransferase of Rhizobium johnstonii (strain DSM 114642 / LMG 32736 / 3841) (Rhizobium leguminosarum bv. viciae).